The following is a 105-amino-acid chain: Large ribosomal subunit protein uL24 (105 aa).

This sequence belongs to the universal ribosomal protein uL24 family. As to quaternary structure, part of the 50S ribosomal subunit.

In terms of biological role, one of two assembly initiator proteins, it binds directly to the 5'-end of the 23S rRNA, where it nucleates assembly of the 50S subunit. Its function is as follows. One of the proteins that surrounds the polypeptide exit tunnel on the outside of the subunit. This is Large ribosomal subunit protein uL24 from Staphylococcus haemolyticus (strain JCSC1435).